Consider the following 437-residue polypeptide: Chaperone SurA (437 aa).

The first 27 residues, 1–27 (MHNHVFKTIARHGLIALFFFFSISAMA), serve as a signal peptide directing secretion. PpiC domains follow at residues 179–280 (QDEF…KLLN) and 290–388 (VDQT…QVLE).

The protein localises to the periplasm. The enzyme catalyses [protein]-peptidylproline (omega=180) = [protein]-peptidylproline (omega=0). Functionally, chaperone involved in the correct folding and assembly of outer membrane proteins. Recognizes specific patterns of aromatic residues and the orientation of their side chains, which are found more frequently in integral outer membrane proteins. May act in both early periplasmic and late outer membrane-associated steps of protein maturation. The sequence is that of Chaperone SurA from Methylobacillus flagellatus (strain ATCC 51484 / DSM 6875 / VKM B-1610 / KT).